Reading from the N-terminus, the 252-residue chain is Protein BTG3 (252 aa).

The interval 138 to 162 (VTSDYHSGSSSSDEETSKEMEVKPS) is disordered.

The protein belongs to the BTG family. In terms of tissue distribution, ubiquitous. High expression in the ventricular zone of the developing central nervous system. High in ovary, testis, prostate, thymus and lung.

Overexpression impairs serum-induced cell cycle progression from the G0/G1 to S phase. This chain is Protein BTG3 (BTG3), found in Homo sapiens (Human).